We begin with the raw amino-acid sequence, 251 residues long: uncharacterized protein (251 aa).

Its subcellular location is the mitochondrion. This is an uncharacterized protein from Arabidopsis thaliana (Mouse-ear cress).